Here is a 631-residue protein sequence, read N- to C-terminus: Putative ATP-dependent DNA helicase Q1 (631 aa).

One can recognise a Helicase ATP-binding domain in the interval 118–293 (INAVMSKEDA…KDMLGIQAAL (176 aa)). 131–138 (LSTGGGKS) contacts ATP. The short motif at 237–240 (DEVH) is the DEVH box element. The 149-residue stretch at 318-466 (CTEEIAKTIK…NLYNMVRYAA (149 aa)) folds into the Helicase C-terminal domain. Zn(2+) is bound by residues Cys471, Cys489, Cys493, and Cys496. The segment at 610–631 (ESKSRKRKASSSVEEEDVMVLD) is disordered. Over residues 622-631 (VEEEDVMVLD) the composition is skewed to acidic residues.

It belongs to the helicase family. RecQ subfamily. The cofactor is Zn(2+).

The protein localises to the nucleus. It catalyses the reaction Couples ATP hydrolysis with the unwinding of duplex DNA by translocating in the 3'-5' direction.. The catalysed reaction is ATP + H2O = ADP + phosphate + H(+). Its function is as follows. DNA helicase that may play a role in the repair of DNA that is damaged by ultraviolet light or other mutagens. Exhibits a magnesium-dependent ATP-dependent DNA-helicase activity that unwinds single- and double-stranded DNA in a 3'-5' direction. The protein is Putative ATP-dependent DNA helicase Q1 of Caenorhabditis elegans.